Here is a 675-residue protein sequence, read N- to C-terminus: MIKLIIDGSEIEISEGSTVYQACIQAGKEIPHFCYHARLKIAGNCRMCLVEIEKSQKPVASCAMPVSKGMVIHTDTPMVKKAREGVMEFLLINHPLDCPICDQGGECDLQDQAFRYGKGTNRFHENKRSIKDKYMGPLIKTAMTRCIQCTRCIRLANDIAGIEEIGAINRGEHMEVTSYLEQTLDSEISGNMIDICPVGALNSKPYAFKARKWELKHTASIGVHDAEGSNIRIDSRADEIMRILPRVNEAINEEWLSDKNRFCYDGLKYQRLDHPYIRKNGKLVEVSWSEAFKTIMDKIKSVKPEKIAAIAGSIVSVEAMFMLKILLQKLGSNNYTVNQFNYKIDTSERGNYLFNTTIVGVEKADLCLLIGANTRQIAPILNSRIGRRVRIGALKVVRIGIGHNQTYKIQDLGNDIKIIEDLAIGTHEYTKAFKEAKYPMIIVGDGVYGRDDGYAVLSLIHKVVDKYNMMRDDWQGFNILHNHASIVGGLDIGFNTTIKFEGIKLAYLLGADAIPFDKLKSAFIIYQGHHGDVGAMSADVILPAAAYTEQSGIYVNLEGRPQIAQKAVSTVGGAKEDIEIIKEIAGYLKIDIGMDNLQEVRIRLAKEYNVFANIDKITVNKFTKFISIDKLSKDPIAARPINYYMTDVISKNSVTMAKCVEAHEERKRDVAKVFY.

Residues 1–78 (MIKLIIDGSE…GMVIHTDTPM (78 aa)) enclose the 2Fe-2S ferredoxin-type domain. [2Fe-2S] cluster is bound by residues Cys-34, Cys-45, Cys-48, and Cys-62. The 40-residue stretch at 78–117 (MVKKAREGVMEFLLINHPLDCPICDQGGECDLQDQAFRYG) folds into the 4Fe-4S His(Cys)3-ligated-type domain. The [4Fe-4S] cluster site is built by His-94, Cys-98, Cys-101, Cys-107, Cys-146, Cys-149, Cys-152, and Cys-196. Residues 215–271 (LKHTASIGVHDAEGSNIRIDSRADEIMRILPRVNEAINEEWLSDKNRFCYDGLKYQR) form the 4Fe-4S Mo/W bis-MGD-type domain.

This sequence belongs to the complex I 75 kDa subunit family. The cofactor is [2Fe-2S] cluster. [4Fe-4S] cluster serves as cofactor.

It carries out the reaction a quinone + NADH + 5 H(+)(in) = a quinol + NAD(+) + 4 H(+)(out). Functionally, NDH-1 shuttles electrons from NADH, via FMN and iron-sulfur (Fe-S) centers, to quinones in the respiratory chain. Couples the redox reaction to proton translocation (for every two electrons transferred, four hydrogen ions are translocated across the cytoplasmic membrane), and thus conserves the redox energy in a proton gradient. In Rickettsia prowazekii (strain Madrid E), this protein is NADH-quinone oxidoreductase subunit G (nuoG).